The following is a 132-amino-acid chain: Protein NrdI (132 aa).

Belongs to the NrdI family.

Probably involved in ribonucleotide reductase function. This is Protein NrdI from Staphylococcus epidermidis (strain ATCC 35984 / DSM 28319 / BCRC 17069 / CCUG 31568 / BM 3577 / RP62A).